Reading from the N-terminus, the 927-residue chain is Clumping factor A (927 aa).

A signal peptide spans 1–39; sequence MNMKKKEKHAIRKKSIGVASVLVGTLIGFGLLSSKEADA. The short motif at 9 to 20 is the YSIRK-G/S signaling motif element; sequence HAIRKKSIGVAS. 2 disordered regions span residues 34 to 200 and 529 to 898; these read SKEA…SNKD and FNNG…SEDE. Residues 40–542 form a ligand binding A region region; sequence SENSVTQSDS…SGSGDGIDKP (503 aa). A compositionally biased stretch (low complexity) spans 47-65; it reads SDSASNESKSNDSSSVSAA. Positions 71–105 are enriched in polar residues; that stretch reads TNVSDTKTSSNTNNGETSVAQNPAQQETTQSSSTN. Composition is skewed to low complexity over residues 106 to 132 and 143 to 162; these read ATTE…ATTQ and NQTS…SVNS. Residues 163 to 200 are compositionally biased toward polar residues; that stretch reads PQNSTNAENVSTTQDTSTEATPSNNESAPQSTDASNKD. Residues 547–565 show a composition bias toward acidic residues; that stretch reads QPDEPGEIEPIPEDSDSDP. Positions 566–598 are enriched in low complexity; the sequence is GSDSGSDSNSDSGSDSGSDSTSDSGSDSASDSD. The segment covering 599-855 has biased composition (acidic residues); sequence SASDSDSASD…DSDSESDSNS (257 aa). The span at 856–867 shows a compositional bias: low complexity; that stretch reads DSESVSNNNVVP. The segment covering 881–890 has biased composition (basic and acidic residues); that stretch reads NEAKDSKEPL. An LPXTG sorting signal motif is present at residues 890–894; it reads LPDTG. The residue at position 893 (T893) is a Pentaglycyl murein peptidoglycan amidated threonine. Residues 894-927 constitute a propeptide, removed by sortase; it reads GSEDEANTSLIWGLLASIGSLLLFRRKKENKDKK.

It belongs to the serine-aspartate repeat-containing protein (SDr) family.

The protein localises to the secreted. It localises to the cell wall. In terms of biological role, cell surface-associated protein implicated in virulence. Promotes bacterial attachment exclusively to the gamma-chain of human fibrinogen. Induces formation of bacterial clumps, which diminish the ability of group IIA phospholipase A2 to cause bacterial phospholipid hydrolysis and killing. Significantly decreases macrophage phagocytosis possibly thanks to the clumps, clumped bacteria being too large to be phagocytosed. Dominant factor responsible for human platelet aggregation, which may be an important mechanism for initiating infective endocarditis. Enhances spleen cell proliferative response in vitro, contributing significantly to the immunostimulatory activity of S.aureus. The sequence is that of Clumping factor A (clfA) from Staphylococcus aureus (strain NCTC 8325 / PS 47).